A 177-amino-acid chain; its full sequence is Large ribosomal subunit protein uL6 (177 aa).

The protein belongs to the universal ribosomal protein uL6 family. As to quaternary structure, part of the 50S ribosomal subunit.

This protein binds to the 23S rRNA, and is important in its secondary structure. It is located near the subunit interface in the base of the L7/L12 stalk, and near the tRNA binding site of the peptidyltransferase center. The sequence is that of Large ribosomal subunit protein uL6 from Salmonella dublin (strain CT_02021853).